Reading from the N-terminus, the 94-residue chain is Small ribosomal subunit protein uS19 (94 aa).

The protein belongs to the universal ribosomal protein uS19 family.

In terms of biological role, protein S19 forms a complex with S13 that binds strongly to the 16S ribosomal RNA. The polypeptide is Small ribosomal subunit protein uS19 (Finegoldia magna (strain ATCC 29328 / DSM 20472 / WAL 2508) (Peptostreptococcus magnus)).